Here is a 311-residue protein sequence, read N- to C-terminus: Pyrimidine-specific ribonucleoside hydrolase RihA (311 aa).

Residue histidine 240 is part of the active site.

Belongs to the IUNH family. RihA subfamily.

In terms of biological role, hydrolyzes cytidine or uridine to ribose and cytosine or uracil, respectively. This chain is Pyrimidine-specific ribonucleoside hydrolase RihA, found in Klebsiella pneumoniae subsp. pneumoniae (strain ATCC 700721 / MGH 78578).